The sequence spans 426 residues: Histidine--tRNA ligase (426 aa).

It belongs to the class-II aminoacyl-tRNA synthetase family. Homodimer.

Its subcellular location is the cytoplasm. The catalysed reaction is tRNA(His) + L-histidine + ATP = L-histidyl-tRNA(His) + AMP + diphosphate + H(+). In Lactiplantibacillus plantarum (strain ATCC BAA-793 / NCIMB 8826 / WCFS1) (Lactobacillus plantarum), this protein is Histidine--tRNA ligase.